A 131-amino-acid polypeptide reads, in one-letter code: D-ribose pyranase (131 aa).

The Proton donor role is filled by His20. Substrate-binding positions include Asp28, His98, and 120–122 (YAN).

The protein belongs to the RbsD / FucU family. RbsD subfamily. As to quaternary structure, homodecamer.

It localises to the cytoplasm. The catalysed reaction is beta-D-ribopyranose = beta-D-ribofuranose. It participates in carbohydrate metabolism; D-ribose degradation; D-ribose 5-phosphate from beta-D-ribopyranose: step 1/2. In terms of biological role, catalyzes the interconversion of beta-pyran and beta-furan forms of D-ribose. The chain is D-ribose pyranase from Symbiobacterium thermophilum (strain DSM 24528 / JCM 14929 / IAM 14863 / T).